The sequence spans 136 residues: Small ribosomal subunit protein eS8 (136 aa).

The protein belongs to the eukaryotic ribosomal protein eS8 family. Part of the 30S ribosomal subunit.

This is Small ribosomal subunit protein eS8 (rps8e) from Aeropyrum pernix (strain ATCC 700893 / DSM 11879 / JCM 9820 / NBRC 100138 / K1).